Reading from the N-terminus, the 153-residue chain is Insulin-like growth factor 1 (153 aa).

The tract at residues 49 to 77 is b; sequence GPETLCGAELVDALQFVCGPRGFYFNKPT. Disulfide bonds link C54/C96, C66/C109, and C95/C100. Residues 78–89 are c; it reads GYGSSIRRAPQT. Residues 90 to 110 form an a region; it reads GIVDECCFRSCDLRRLEMYCA. Positions 111 to 118 are d; sequence PLKPTKAA. Positions 119-153 are cleaved as a propeptide — e peptide; sequence RSIRAQRHTDMPKTQKEVHLKNTSRGSAGNKTYRM. The tract at residues 120–153 is disordered; that stretch reads SIRAQRHTDMPKTQKEVHLKNTSRGSAGNKTYRM. Positions 125 to 138 are enriched in basic and acidic residues; sequence RHTDMPKTQKEVHL. Polar residues predominate over residues 139–153; that stretch reads KNTSRGSAGNKTYRM.

The protein belongs to the insulin family. Forms a ternary complex with IGFR1 and ITGAV:ITGB3. Forms a ternary complex with IGFR1 and ITGA6:ITGB4. Interacts with SH2D3C isoform 2. Forms a ternary complex with IGFBP3 and ALS.

The protein localises to the secreted. Functionally, the insulin-like growth factors, isolated from plasma, are structurally and functionally related to insulin but have a much higher growth-promoting activity. May be a physiological regulator of [1-14C]-2-deoxy-D-glucose (2DG) transport and glycogen synthesis in osteoblasts. Stimulates glucose transport in bone-derived osteoblastic (PyMS) cells and is effective at much lower concentrations than insulin, not only regarding glycogen and DNA synthesis but also with regard to enhancing glucose uptake. May play a role in synapse maturation. Ca(2+)-dependent exocytosis of IGF1 is required for sensory perception of smell in the olfactory bulb. Acts as a ligand for IGF1R. Binds to the alpha subunit of IGF1R, leading to the activation of the intrinsic tyrosine kinase activity which autophosphorylates tyrosine residues in the beta subunit thus initiating a cascade of down-stream signaling events leading to activation of the PI3K-AKT/PKB and the Ras-MAPK pathways. Binds to integrins ITGAV:ITGB3 and ITGA6:ITGB4. Its binding to integrins and subsequent ternary complex formation with integrins and IGFR1 are essential for IGF1 signaling. Induces the phosphorylation and activation of IGFR1, MAPK3/ERK1, MAPK1/ERK2 and AKT1. As part of the MAPK/ERK signaling pathway, acts as a negative regulator of apoptosis in cardiomyocytes via promotion of STUB1/CHIP-mediated ubiquitination and degradation of ICER-type isoforms of CREM. This is Insulin-like growth factor 1 from Mus musculus (Mouse).